Consider the following 376-residue polypeptide: Cytochrome b (376 aa).

The next 4 membrane-spanning stretches (helical) occupy residues 28 to 48, 72 to 94, 107 to 127, and 169 to 189; these read YGFLLGIIFFIQILTGVFLAS, WCFRYMHATGASLVFFLTYLHIL, SWISGLIIFALFIVTAFIGYV, and FFVLHFILPFVALCIVFIHIF. 2 residues coordinate heme b: histidine 78 and histidine 92. Heme b is bound by residues histidine 173 and histidine 187. Residue histidine 192 coordinates a ubiquinone. A run of 4 helical transmembrane segments spans residues 214–234, 274–294, 317–337, and 340–360; these read LLSLDVKGFNNILILFLIQSI, IPSKNAGLVIVVASLQLLFLL, VPIIWFMCSFYALLWIGCQLP, and IFILYGRLFIILFFSSGLFAL.

This sequence belongs to the cytochrome b family. In terms of assembly, the main subunits of complex b-c1 are: cytochrome b, cytochrome c1 and the Rieske protein. It depends on heme b as a cofactor.

The protein resides in the mitochondrion inner membrane. In terms of biological role, component of the ubiquinol-cytochrome c reductase complex (complex III or cytochrome b-c1 complex) that is part of the mitochondrial respiratory chain. The b-c1 complex mediates electron transfer from ubiquinol to cytochrome c. Contributes to the generation of a proton gradient across the mitochondrial membrane that is then used for ATP synthesis. In Plasmodium chabaudi, this protein is Cytochrome b (MT-CYB).